We begin with the raw amino-acid sequence, 158 residues long: NAD(P)H-quinone oxidoreductase subunit J, chloroplastic (158 aa).

This sequence belongs to the complex I 30 kDa subunit family. As to quaternary structure, NDH is composed of at least 16 different subunits, 5 of which are encoded in the nucleus.

The protein localises to the plastid. It localises to the chloroplast thylakoid membrane. It carries out the reaction a plastoquinone + NADH + (n+1) H(+)(in) = a plastoquinol + NAD(+) + n H(+)(out). The enzyme catalyses a plastoquinone + NADPH + (n+1) H(+)(in) = a plastoquinol + NADP(+) + n H(+)(out). In terms of biological role, NDH shuttles electrons from NAD(P)H:plastoquinone, via FMN and iron-sulfur (Fe-S) centers, to quinones in the photosynthetic chain and possibly in a chloroplast respiratory chain. The immediate electron acceptor for the enzyme in this species is believed to be plastoquinone. Couples the redox reaction to proton translocation, and thus conserves the redox energy in a proton gradient. The chain is NAD(P)H-quinone oxidoreductase subunit J, chloroplastic from Lupinus luteus (European yellow lupine).